Consider the following 262-residue polypeptide: Aquaporin TIP3-1 (262 aa).

Helical transmembrane passes span 27–47 and 61–81; these read AAISEFIATAIFVFAAEGSVL and GLVAVALAHALALAVAVAVAV. The short motif at 89–91 is the NPA 1 element; it reads NPA. The next 3 membrane-spanning stretches (helical) occupy residues 104–124, 148–168, and 175–195; these read LVRAVLYWVAQLLGAVAATLL, AVLLEAVMTFGLMYAYYATVI, and VGTIAPLAVGFLLGANVLAGG. The NPA 2 signature appears at 203–205; the sequence is NPA. The helical transmembrane segment at 223 to 243 threads the bilayer; it reads YWLGPFLGAGLAGLVYEYLVI.

It belongs to the MIP/aquaporin (TC 1.A.8) family. TIP (TC 1.A.8.10) subfamily.

The protein localises to the vacuole membrane. Its function is as follows. Aquaporins facilitate the transport of water and small neutral solutes across cell membranes. This chain is Aquaporin TIP3-1 (TIP3-1), found in Zea mays (Maize).